Here is a 463-residue protein sequence, read N- to C-terminus: Argininosuccinate lyase (463 aa).

This sequence belongs to the lyase 1 family. Argininosuccinate lyase subfamily.

It localises to the cytoplasm. The enzyme catalyses 2-(N(omega)-L-arginino)succinate = fumarate + L-arginine. It participates in amino-acid biosynthesis; L-arginine biosynthesis; L-arginine from L-ornithine and carbamoyl phosphate: step 3/3. This is Argininosuccinate lyase from Methylorubrum populi (strain ATCC BAA-705 / NCIMB 13946 / BJ001) (Methylobacterium populi).